Here is a 63-residue protein sequence, read N- to C-terminus: Small ribosomal subunit protein bS21 (63 aa).

Over residues 40-52 (KPSVKRKLKSEAA) the composition is skewed to basic and acidic residues. The interval 40 to 63 (KPSVKRKLKSEAARKRKNKRGRRY) is disordered. Positions 53–63 (RKRKNKRGRRY) are enriched in basic residues.

This sequence belongs to the bacterial ribosomal protein bS21 family.

In Limosilactobacillus reuteri (strain DSM 20016) (Lactobacillus reuteri), this protein is Small ribosomal subunit protein bS21.